A 457-amino-acid chain; its full sequence is MSIATINPATGETVKTFTPTTQDEVEDAIARAYARFDNYRHTTFTQRAKWANATADLLEAEANQSAALMTLEMGKTLQSAKDEAMKCAKGFRYYAEKAETLLADEPAEAAAVGASKALARYQPLGVVLAVMPWNFPLWQTVRFAAPALMAGNVGLLKHASNVPQCALYLADVIARGGFPEDCFQTLLISANGVEAILRDPRVAAATLTGSEPAGQAVGAIAGNEIKPTVLELGGSDPFIVMPSADLDAAVATAVTGRVQNNGQSCIAAKRFIAHADIYDEFVEKFVARMETLRVGDPTDPDTDVGPLATESGRAQVEQQVDAAAAAGAVIRCGGKRPDRPGWFYPPTVITDITKDMALYTDEVFGPVASVYCATNIDDAIEIANATPFGLGSNAWTQNESEQRHFIDNIVAGQVFINGMTVSYPELPFGGIKRSGYGRELSTHGIREFCNIKTVWIA.

NADP(+) contacts are provided by residues 133 to 134 (WN), 157 to 160 (KHAS), and 209 to 210 (GS). Catalysis depends on glutamate 231, which acts as the Proton acceptor. Residue leucine 232 coordinates NADP(+). Cysteine 265 (nucleophile) is an active-site residue. Glutamate 362 is a binding site for NADP(+).

It belongs to the aldehyde dehydrogenase family.

It catalyses the reaction succinate semialdehyde + NADP(+) + H2O = succinate + NADPH + 2 H(+). Catalyzes the NADP(+)-dependent oxidation of succinate semialdehyde to succinate. It is believed to be the main source of succinate semialdehyde dehydrogenase activity in Mycobacterium. This chain is Succinate-semialdehyde dehydrogenase [NADP(+)] (gabD1), found in Mycobacterium leprae (strain TN).